The sequence spans 326 residues: 5,10-methylenetetrahydromethanopterin reductase (326 aa).

The protein belongs to the mer family.

Its subcellular location is the cytoplasm. The catalysed reaction is 5-methyl-5,6,7,8-tetrahydromethanopterin + oxidized coenzyme F420-(gamma-L-Glu)(n) + H(+) = 5,10-methylenetetrahydromethanopterin + reduced coenzyme F420-(gamma-L-Glu)(n). The protein operates within one-carbon metabolism; methanogenesis from CO(2); methyl-coenzyme M from 5,10-methylene-5,6,7,8-tetrahydromethanopterin: step 1/2. Functionally, catalyzes the reversible reduction of methylene-H(4)MPT to methyl-H(4)MPT. The sequence is that of 5,10-methylenetetrahydromethanopterin reductase from Methanolobus tindarius.